Reading from the N-terminus, the 555-residue chain is Urocanate hydratase (555 aa).

NAD(+) contacts are provided by residues G52–G53, Q130, G176–G178, E196, R201, N242–A243, Q263–H267, Y273–L274, and Y322. C410 is an active-site residue. G492 provides a ligand contact to NAD(+).

The protein belongs to the urocanase family. It depends on NAD(+) as a cofactor.

It is found in the cytoplasm. The catalysed reaction is 4-imidazolone-5-propanoate = trans-urocanate + H2O. It participates in amino-acid degradation; L-histidine degradation into L-glutamate; N-formimidoyl-L-glutamate from L-histidine: step 2/3. Catalyzes the conversion of urocanate to 4-imidazolone-5-propionate. The protein is Urocanate hydratase of Shewanella baltica (strain OS155 / ATCC BAA-1091).